Reading from the N-terminus, the 215-residue chain is Octanoyltransferase (215 aa).

The region spanning 42–215 (QNTPDEIWLL…AEKLKARLKQ (174 aa)) is the BPL/LPL catalytic domain. Substrate contacts are provided by residues 81 to 88 (RGGQITYH), 148 to 150 (ALG), and 161 to 163 (GLA). Cysteine 179 (acyl-thioester intermediate) is an active-site residue.

Belongs to the LipB family.

It is found in the cytoplasm. The catalysed reaction is octanoyl-[ACP] + L-lysyl-[protein] = N(6)-octanoyl-L-lysyl-[protein] + holo-[ACP] + H(+). Its pathway is protein modification; protein lipoylation via endogenous pathway; protein N(6)-(lipoyl)lysine from octanoyl-[acyl-carrier-protein]: step 1/2. In terms of biological role, catalyzes the transfer of endogenously produced octanoic acid from octanoyl-acyl-carrier-protein onto the lipoyl domains of lipoate-dependent enzymes. Lipoyl-ACP can also act as a substrate although octanoyl-ACP is likely to be the physiological substrate. This Nitrosospira multiformis (strain ATCC 25196 / NCIMB 11849 / C 71) protein is Octanoyltransferase.